The primary structure comprises 478 residues: Aspartate ammonia-lyase (478 aa).

L-aspartate contacts are provided by threonine 109, serine 148, threonine 149, asparagine 150, and threonine 195. The SS loop stretch occupies residues 326-335 (GSSIMPGKVN). Serine 327 functions as the Proton acceptor in the catalytic mechanism. Residues serine 328 and lysine 333 each contribute to the L-aspartate site.

Belongs to the class-II fumarase/aspartase family. Aspartase subfamily. As to quaternary structure, homotetramer.

It catalyses the reaction L-aspartate = fumarate + NH4(+). Functionally, catalyzes the reversible conversion of L-aspartate to fumarate and ammonia. This chain is Aspartate ammonia-lyase, found in Pseudomonas fluorescens.